The primary structure comprises 250 residues: Global transcriptional regulator CodY (250 aa).

Residues 1–147 are GAF domain; that stretch reads MSTLLEKTRK…GATVVGLEIL (147 aa). Residues 195–214 constitute a DNA-binding region (H-T-H motif); that stretch reads ASKIADKVGITRSVIVNALR.

This sequence belongs to the CodY family.

It localises to the cytoplasm. In terms of biological role, DNA-binding global transcriptional regulator which is involved in the adaptive response to starvation and acts by directly or indirectly controlling the expression of numerous genes in response to nutrient availability. During rapid exponential growth, CodY is highly active and represses genes whose products allow adaptation to nutrient depletion. The sequence is that of Global transcriptional regulator CodY from Thermoanaerobacter sp. (strain X514).